Reading from the N-terminus, the 474-residue chain is Bifunctional protein HldE (474 aa).

The segment at 1 to 317 is ribokinase; sequence MKLSMPRFDR…RRAVQREQGS (317 aa). ATP is bound at residue 194–197; that stretch reads NLAE. Residue D263 is part of the active site. A cytidylyltransferase region spans residues 343–474; it reads FTNGCFDILH…GIVEKIRRQP (132 aa).

In the N-terminal section; belongs to the carbohydrate kinase PfkB family. It in the C-terminal section; belongs to the cytidylyltransferase family. Homodimer.

The catalysed reaction is D-glycero-beta-D-manno-heptose 7-phosphate + ATP = D-glycero-beta-D-manno-heptose 1,7-bisphosphate + ADP + H(+). The enzyme catalyses D-glycero-beta-D-manno-heptose 1-phosphate + ATP + H(+) = ADP-D-glycero-beta-D-manno-heptose + diphosphate. Its pathway is nucleotide-sugar biosynthesis; ADP-L-glycero-beta-D-manno-heptose biosynthesis; ADP-L-glycero-beta-D-manno-heptose from D-glycero-beta-D-manno-heptose 7-phosphate: step 1/4. It participates in nucleotide-sugar biosynthesis; ADP-L-glycero-beta-D-manno-heptose biosynthesis; ADP-L-glycero-beta-D-manno-heptose from D-glycero-beta-D-manno-heptose 7-phosphate: step 3/4. Functionally, catalyzes the phosphorylation of D-glycero-D-manno-heptose 7-phosphate at the C-1 position to selectively form D-glycero-beta-D-manno-heptose-1,7-bisphosphate. Its function is as follows. Catalyzes the ADP transfer from ATP to D-glycero-beta-D-manno-heptose 1-phosphate, yielding ADP-D-glycero-beta-D-manno-heptose. The protein is Bifunctional protein HldE of Azotobacter vinelandii (strain DJ / ATCC BAA-1303).